Reading from the N-terminus, the 506-residue chain is UPF0371 protein FN1121 (506 aa).

Belongs to the UPF0371 family.

This is UPF0371 protein FN1121 from Fusobacterium nucleatum subsp. nucleatum (strain ATCC 25586 / DSM 15643 / BCRC 10681 / CIP 101130 / JCM 8532 / KCTC 2640 / LMG 13131 / VPI 4355).